We begin with the raw amino-acid sequence, 371 residues long: N-acetyldiaminopimelate deacetylase (371 aa).

Residue aspartate 68 is part of the active site. Glutamate 127 (proton acceptor) is an active-site residue.

Belongs to the peptidase M20A family. N-acetyldiaminopimelate deacetylase subfamily.

It catalyses the reaction N-acetyl-(2S,6S)-2,6-diaminopimelate + H2O = (2S,6S)-2,6-diaminopimelate + acetate. Its pathway is amino-acid biosynthesis; L-lysine biosynthesis via DAP pathway; LL-2,6-diaminopimelate from (S)-tetrahydrodipicolinate (acetylase route): step 3/3. Its function is as follows. Catalyzes the conversion of N-acetyl-diaminopimelate to diaminopimelate and acetate. This Listeria monocytogenes serotype 4a (strain HCC23) protein is N-acetyldiaminopimelate deacetylase.